Reading from the N-terminus, the 392-residue chain is MTRPFNRVHLIVMDSVGIGEAPDAADFKDEGSHTLRHTLEGFDQTLPNLEKLGLGNIDKLPVVNAVEQPEAYYTKLSEASVGKDTMTGHWEIMGLNIMQPFKVYPNGFPEELIQQIEEMTGRKVVANKPASGTQIIDEWGEHQMKTGDLIVYTSADPVLQIAAHEDIIPLEELYDICEKVRELTKDPKYLIGRIIARPYVGEPGNFTRTSNRHDYALKPFGKTVLDHLKDGGYDVIAIGKINDIYDGEGVTEAVRTKSNMDGMDQLMKIVKKDFTGISFLNLVDFDALYGHRRDKPGYAQAIKDFDDRLPELFSNLKEDDLVIITADHGNDPTAPGTDHTREYIPVIMYSPKFKGGHALESDTTFSSIGATIADNFNVTLPEFGKSYLKELK.

Asp-14, Asp-286, His-291, Asp-327, His-328, and His-339 together coordinate Mn(2+).

It belongs to the phosphopentomutase family. Mn(2+) is required as a cofactor.

The protein localises to the cytoplasm. It catalyses the reaction 2-deoxy-alpha-D-ribose 1-phosphate = 2-deoxy-D-ribose 5-phosphate. The enzyme catalyses alpha-D-ribose 1-phosphate = D-ribose 5-phosphate. It functions in the pathway carbohydrate degradation; 2-deoxy-D-ribose 1-phosphate degradation; D-glyceraldehyde 3-phosphate and acetaldehyde from 2-deoxy-alpha-D-ribose 1-phosphate: step 1/2. In terms of biological role, isomerase that catalyzes the conversion of deoxy-ribose 1-phosphate (dRib-1-P) and ribose 1-phosphate (Rib-1-P) to deoxy-ribose 5-phosphate (dRib-5-P) and ribose 5-phosphate (Rib-5-P), respectively. The protein is Phosphopentomutase of Staphylococcus aureus (strain Mu3 / ATCC 700698).